A 214-amino-acid polypeptide reads, in one-letter code: MIVKNTEFIKSATRPAHYPEGHLPEIAFAGRSNVGKSSLVNVLVNRKNLVRTSSTPGRTQLINFFQVNDDFMLVDLPGYGYAKVPLAVKKEWRPMMETYLSKRRNLRGVVLILDIRRTPTEEDLQMLTWLRAFSVPPVIVITKCDKVSKNERARQSAIIMEKMHLKKEELNYFSALSREGKDAVWARIDALLEPTAAETPGIPEEPAPPGPVND.

One can recognise an EngB-type G domain in the interval 22–194 (HLPEIAFAGR…WARIDALLEP (173 aa)). GTP contacts are provided by residues 30-37 (GRSNVGKS), 57-61 (GRTQL), 75-78 (DLPG), 142-145 (TKCD), and 173-175 (FSA). Mg(2+) contacts are provided by S37 and T59. The segment at 195–214 (TAAETPGIPEEPAPPGPVND) is disordered. Pro residues predominate over residues 203–214 (PEEPAPPGPVND).

It belongs to the TRAFAC class TrmE-Era-EngA-EngB-Septin-like GTPase superfamily. EngB GTPase family. Mg(2+) serves as cofactor.

In terms of biological role, necessary for normal cell division and for the maintenance of normal septation. This Geobacter sp. (strain M21) protein is Probable GTP-binding protein EngB.